The following is a 356-amino-acid chain: Dual-specificity RNA methyltransferase RlmN (356 aa).

Glu89 functions as the Proton acceptor in the catalytic mechanism. The Radical SAM core domain occupies 108 to 341 (SHARYTICVS…CTIRESKGLD (234 aa)). A disulfide bond links Cys115 and Cys346. Residues Cys122, Cys126, and Cys129 each coordinate [4Fe-4S] cluster. Residues 172–173 (GE), Ser204, 227–229 (SLH), and Asn303 each bind S-adenosyl-L-methionine. The S-methylcysteine intermediate role is filled by Cys346.

The protein belongs to the radical SAM superfamily. RlmN family. [4Fe-4S] cluster serves as cofactor.

It localises to the cytoplasm. The enzyme catalyses adenosine(2503) in 23S rRNA + 2 reduced [2Fe-2S]-[ferredoxin] + 2 S-adenosyl-L-methionine = 2-methyladenosine(2503) in 23S rRNA + 5'-deoxyadenosine + L-methionine + 2 oxidized [2Fe-2S]-[ferredoxin] + S-adenosyl-L-homocysteine. It carries out the reaction adenosine(37) in tRNA + 2 reduced [2Fe-2S]-[ferredoxin] + 2 S-adenosyl-L-methionine = 2-methyladenosine(37) in tRNA + 5'-deoxyadenosine + L-methionine + 2 oxidized [2Fe-2S]-[ferredoxin] + S-adenosyl-L-homocysteine. In terms of biological role, specifically methylates position 2 of adenine 2503 in 23S rRNA and position 2 of adenine 37 in tRNAs. m2A2503 modification seems to play a crucial role in the proofreading step occurring at the peptidyl transferase center and thus would serve to optimize ribosomal fidelity. The polypeptide is Dual-specificity RNA methyltransferase RlmN (Campylobacter jejuni subsp. jejuni serotype O:23/36 (strain 81-176)).